A 353-amino-acid polypeptide reads, in one-letter code: Dihydroorotate dehydrogenase (quinone) (353 aa).

Residues 67–71 (AGFDK) and Thr91 contribute to the FMN site. Position 71 (Lys71) interacts with substrate. A substrate-binding site is contributed by 116 to 120 (NRMGF). Residues Asn144 and Asn177 each coordinate FMN. Substrate is bound at residue Asn177. The Nucleophile role is filled by Ser180. Asn182 is a substrate binding site. 2 residues coordinate FMN: Lys215 and Thr243. Residue 244 to 245 (NT) coordinates substrate. FMN is bound by residues Gly264, Gly293, and 314 to 315 (YT).

The protein belongs to the dihydroorotate dehydrogenase family. Type 2 subfamily. As to quaternary structure, monomer. FMN serves as cofactor.

Its subcellular location is the cell membrane. The catalysed reaction is (S)-dihydroorotate + a quinone = orotate + a quinol. The protein operates within pyrimidine metabolism; UMP biosynthesis via de novo pathway; orotate from (S)-dihydroorotate (quinone route): step 1/1. Functionally, catalyzes the conversion of dihydroorotate to orotate with quinone as electron acceptor. The polypeptide is Dihydroorotate dehydrogenase (quinone) (Gloeobacter violaceus (strain ATCC 29082 / PCC 7421)).